Here is a 468-residue protein sequence, read N- to C-terminus: Na(+)/H(+) antiporter NhaA 2 (468 aa).

Helical transmembrane passes span 31–51 (FLHVQAASGIVLLIATAVALA), 82–102 (LHFWINDGLMTIFFFVVGLEI), 118–138 (VLPVAAALGGMLFPALIYLAL), 147–167 (GWGVPMATDIAFAVGALALLG), 176–196 (VLLLALAIIDDIGAILVIAVF), 199–219 (SSISVTGFGLVAVGIAGVLAL), 226–246 (SPVVYAAAGVVIWAGLLSAGV), 321–341 (PWVAYGIMPLFALANAGVSLG), 353–373 (LLLGVVFGLTMGKPLGIMVAC), 393–413 (VLVVGCVAGIGFTMAIFVAGL), and 422–442 (GVAKLAVLLGSLISALVAMAV).

Belongs to the NhaA Na(+)/H(+) (TC 2.A.33) antiporter family.

It localises to the cell inner membrane. It carries out the reaction Na(+)(in) + 2 H(+)(out) = Na(+)(out) + 2 H(+)(in). Functionally, na(+)/H(+) antiporter that extrudes sodium in exchange for external protons. In Sorangium cellulosum (strain So ce56) (Polyangium cellulosum (strain So ce56)), this protein is Na(+)/H(+) antiporter NhaA 2.